The primary structure comprises 508 residues: Chromosomal replication initiator protein DnaA (508 aa).

The interval 1 to 90 (MSVELWQQCV…RRSSAPRAAP (90 aa)) is domain I, interacts with DnaA modulators. A domain II region spans residues 91–171 (NAPVSAAVAA…QVEGALKHTS (81 aa)). The interval 130 to 160 (EVEEPSSRDSFDSMSDSGSVPAASGRTEQRT) is disordered. Residues 172-388 (YLNRTFTFET…GALKRVIAHS (217 aa)) form a domain III, AAA+ region region. Positions 216, 218, 219, and 220 each coordinate ATP. Residues 389–508 (HFMGRDITIE…YKNLLRTLTT (120 aa)) are domain IV, binds dsDNA.

It belongs to the DnaA family. In terms of assembly, oligomerizes as a right-handed, spiral filament on DNA at oriC.

It localises to the cytoplasm. Plays an essential role in the initiation and regulation of chromosomal replication. ATP-DnaA binds to the origin of replication (oriC) to initiate formation of the DNA replication initiation complex once per cell cycle. Binds the DnaA box (a 9 base pair repeat at the origin) and separates the double-stranded (ds)DNA. Forms a right-handed helical filament on oriC DNA; dsDNA binds to the exterior of the filament while single-stranded (ss)DNA is stabiized in the filament's interior. The ATP-DnaA-oriC complex binds and stabilizes one strand of the AT-rich DNA unwinding element (DUE), permitting loading of DNA polymerase. After initiation quickly degrades to an ADP-DnaA complex that is not apt for DNA replication. Binds acidic phospholipids. The sequence is that of Chromosomal replication initiator protein DnaA from Pseudomonas entomophila (strain L48).